The chain runs to 173 residues: UPF0316 protein Amet_0954 (173 aa).

The next 3 membrane-spanning stretches (helical) occupy residues 3–23 (LVLG…MGTV), 38–58 (AIGF…LEAL), and 61–81 (PVNI…GIYI).

Belongs to the UPF0316 family.

The protein resides in the cell membrane. This Alkaliphilus metalliredigens (strain QYMF) protein is UPF0316 protein Amet_0954.